The primary structure comprises 883 residues: Alanine--tRNA ligase (883 aa).

Residues H563, H567, C673, and H677 each contribute to the Zn(2+) site.

This sequence belongs to the class-II aminoacyl-tRNA synthetase family. Requires Zn(2+) as cofactor.

It localises to the cytoplasm. The enzyme catalyses tRNA(Ala) + L-alanine + ATP = L-alanyl-tRNA(Ala) + AMP + diphosphate. Its function is as follows. Catalyzes the attachment of alanine to tRNA(Ala) in a two-step reaction: alanine is first activated by ATP to form Ala-AMP and then transferred to the acceptor end of tRNA(Ala). Also edits incorrectly charged Ser-tRNA(Ala) and Gly-tRNA(Ala) via its editing domain. The polypeptide is Alanine--tRNA ligase (Caulobacter sp. (strain K31)).